A 214-amino-acid polypeptide reads, in one-letter code: Large ribosomal subunit protein uL2my, C-terminal part (214 aa).

The transit peptide at 1 to 30 (MSGLVALCRARASASSSLFNSVIRPAFRNF) directs the protein to the mitochondrion. The interval 157–214 (VAMNPCDHPHGGGEGKSKSSGSRGRTSVSPWGKPCKGGYKSASVKKKKKRLAEAAAKM) is disordered. The segment covering 163-173 (DHPHGGGEGKS) has biased composition (basic and acidic residues). Positions 174–185 (KSSGSRGRTSVS) are enriched in low complexity.

Belongs to the universal ribosomal protein uL2 family. In terms of assembly, component of the mitochondrial ribosome large subunit.

The protein resides in the mitochondrion. The sequence is that of Large ribosomal subunit protein uL2my, C-terminal part from Arabidopsis thaliana (Mouse-ear cress).